A 252-amino-acid polypeptide reads, in one-letter code: Intraflagellar transport associated protein 2 (252 aa).

Residues G35–T42 and W118–K125 contribute to the GTP site.

It belongs to the small GTPase superfamily. Rab family. Component of the IFT complex B composed of at least che-2, che-13, dyf-1, dyf-3, dyf-6, dyf-11, dyf-13, ift-20, ift-74, ift-81, ifta-2, osm-1, osm-5 and osm-6. In terms of tissue distribution, ciliated sensory neurons.

The protein localises to the cytoplasm. Its subcellular location is the cytoskeleton. It localises to the cilium axoneme. Component of the intraflagellar transport (IFT) complex B required for transport of proteins in the motile cilium. May be required for ciliary entrance and transport of specific ciliary cargo proteins such as che-3 which are related to motility. Regulates specific signaling activities in the cilia, such as the daf-2/insulin receptor-like transduction pathway. The polypeptide is Intraflagellar transport associated protein 2 (Caenorhabditis elegans).